The following is a 208-amino-acid chain: FMN-dependent NADH:quinone oxidoreductase 4 (208 aa).

The protein belongs to the azoreductase type 1 family. Homodimer. Requires FMN as cofactor.

It carries out the reaction 2 a quinone + NADH + H(+) = 2 a 1,4-benzosemiquinone + NAD(+). It catalyses the reaction N,N-dimethyl-1,4-phenylenediamine + anthranilate + 2 NAD(+) = 2-(4-dimethylaminophenyl)diazenylbenzoate + 2 NADH + 2 H(+). Its function is as follows. Quinone reductase that provides resistance to thiol-specific stress caused by electrophilic quinones. In terms of biological role, also exhibits azoreductase activity. Catalyzes the reductive cleavage of the azo bond in aromatic azo compounds to the corresponding amines. The sequence is that of FMN-dependent NADH:quinone oxidoreductase 4 from Bacillus cereus (strain ZK / E33L).